Reading from the N-terminus, the 265-residue chain is MDTAQKQRWAITLSYDGSRFYGWQKQADGVPTVQAALETALAQIAGEAVSTTVAGRTDTGVHATAQVVHFDTTAARPQQAWVRGVNAHLPEGIAVLHARQVAPEFHARFDAYGRHYRYLLESVPVRSPLLKNRAGWTHLKLDIGPMRRAAALLIGEQDFSSFRAAECQAKSPVKTIYRADLTQSSGLVRLDLHGNAFLHHMVRNIMGALVYVGSGRLSVEGFAALIQERSRLKAPPTFMPDGLYLTGVDYPEAYGIIRPQIPEWL.

Aspartate 58 functions as the Nucleophile in the catalytic mechanism. Residue tyrosine 116 coordinates substrate.

Belongs to the tRNA pseudouridine synthase TruA family. In terms of assembly, homodimer.

The catalysed reaction is uridine(38/39/40) in tRNA = pseudouridine(38/39/40) in tRNA. In terms of biological role, formation of pseudouridine at positions 38, 39 and 40 in the anticodon stem and loop of transfer RNAs. The chain is tRNA pseudouridine synthase A from Neisseria meningitidis serogroup C / serotype 2a (strain ATCC 700532 / DSM 15464 / FAM18).